A 507-amino-acid chain; its full sequence is Cytochrome c-552 (507 aa).

Positions 1–22 (MTKFKLLLAGSLVAIVSMGLLA) are cleaved as a signal peptide. Residues His-102, Cys-130, Cys-133, Lys-134, Cys-168, Cys-171, His-172, Cys-211, Cys-214, and His-215 each contribute to the heme c site. Glu-217, Tyr-218, Lys-274, and Gln-276 together coordinate Ca(2+). Residue Tyr-218 coordinates substrate. His-277 is a substrate binding site. Heme c is bound by residues His-288, Cys-295, Cys-298, His-299, His-313, Cys-326, Cys-329, His-330, and His-405.

This sequence belongs to the cytochrome c-552 family. As to quaternary structure, homodimer. Interacts with NrfH. May form a heterotetramer with NrfH. Requires Ca(2+) as cofactor. Heme c serves as cofactor.

Its subcellular location is the periplasm. It carries out the reaction 6 Fe(III)-[cytochrome c] + NH4(+) + 2 H2O = 6 Fe(II)-[cytochrome c] + nitrite + 8 H(+). The protein operates within nitrogen metabolism; nitrate reduction (assimilation). In terms of biological role, catalyzes the reduction of nitrite to ammonia, consuming six electrons in the process. Has very low activity toward hydroxylamine, and even lower activity toward sulfite. Sulfite reductase activity is maximal at neutral pH. This Wolinella succinogenes (strain ATCC 29543 / DSM 1740 / CCUG 13145 / JCM 31913 / LMG 7466 / NCTC 11488 / FDC 602W) (Vibrio succinogenes) protein is Cytochrome c-552 (nrfA).